The primary structure comprises 280 residues: Protein lyl-1 (280 aa).

Residues 1–60 (MCPPQAQAEVGPTMTEKAEMVCAPSPAPAPPPKPASPGPPQVEEVGHRGGSSPPRLPPGV) are disordered. The segment covering 25 to 40 (SPAPAPPPKPASPGPP) has biased composition (pro residues). Residues 150–202 (ARRVFTNSRERWRQQNVNGAFAELRKLLPTHPPDRKLSKNEVLRLAMKYIGFL) enclose the bHLH domain. Positions 214 to 280 (AAGPTPPGPR…EQTALSPEVR (67 aa)) are disordered. Residues 229-245 (RVPDDGARRGSGRRAEA) show a composition bias toward basic and acidic residues. The span at 257 to 267 (PDGSPGGAARP) shows a compositional bias: low complexity. 2 positions are modified to phosphoserine: Ser-260 and Ser-276.

As to quaternary structure, efficient DNA binding requires dimerization with another bHLH protein.

The protein resides in the nucleus. The chain is Protein lyl-1 (LYL1) from Homo sapiens (Human).